The chain runs to 227 residues: Adenosylcobinamide-GDP ribazoletransferase (227 aa).

A run of 5 helical transmembrane segments spans residues C3 to F23, I26 to F46, G95 to E115, W117 to Y137, and A165 to F185.

The protein belongs to the CobS family. Mg(2+) is required as a cofactor.

It is found in the cell membrane. It catalyses the reaction alpha-ribazole + adenosylcob(III)inamide-GDP = adenosylcob(III)alamin + GMP + H(+). The enzyme catalyses alpha-ribazole 5'-phosphate + adenosylcob(III)inamide-GDP = adenosylcob(III)alamin 5'-phosphate + GMP + H(+). It functions in the pathway cofactor biosynthesis; adenosylcobalamin biosynthesis; adenosylcobalamin from cob(II)yrinate a,c-diamide: step 7/7. Functionally, joins adenosylcobinamide-GDP and alpha-ribazole to generate adenosylcobalamin (Ado-cobalamin). Also synthesizes adenosylcobalamin 5'-phosphate from adenosylcobinamide-GDP and alpha-ribazole 5'-phosphate. This chain is Adenosylcobinamide-GDP ribazoletransferase, found in Pyrobaculum islandicum (strain DSM 4184 / JCM 9189 / GEO3).